A 435-amino-acid chain; its full sequence is GTPase Obg (435 aa).

The region spanning 6-164 (ADFVDRVKIF…RWLELELKIL (159 aa)) is the Obg domain. The region spanning 165-335 (ADVGLVGYPN…LVSKLASIVR (171 aa)) is the OBG-type G domain. GTP-binding positions include 171 to 178 (GYPNVGKS), 196 to 200 (FTTLI), 217 to 220 (DIPG), 287 to 290 (NKID), and 316 to 318 (SAL). Mg(2+) contacts are provided by S178 and T198. In terms of domain architecture, OCT spans 357–435 (RRLPEKFHLE…IGDFEFEYRE (79 aa)).

This sequence belongs to the TRAFAC class OBG-HflX-like GTPase superfamily. OBG GTPase family. In terms of assembly, monomer. It depends on Mg(2+) as a cofactor.

It localises to the cytoplasm. Its function is as follows. An essential GTPase which binds GTP, GDP and possibly (p)ppGpp with moderate affinity, with high nucleotide exchange rates and a fairly low GTP hydrolysis rate. Plays a role in control of the cell cycle, stress response, ribosome biogenesis and in those bacteria that undergo differentiation, in morphogenesis control. The protein is GTPase Obg of Thermotoga sp. (strain RQ2).